We begin with the raw amino-acid sequence, 172 residues long: RNA pyrophosphohydrolase (172 aa).

The 144-residue stretch at 6–149 (GYRLNVGIVI…KRDVYRRAMK (144 aa)) folds into the Nudix hydrolase domain. A Nudix box motif is present at residues 38–59 (GGIDEGETPEQAMYRELYEEVG).

Belongs to the Nudix hydrolase family. RppH subfamily. Requires a divalent metal cation as cofactor.

In terms of biological role, accelerates the degradation of transcripts by removing pyrophosphate from the 5'-end of triphosphorylated RNA, leading to a more labile monophosphorylated state that can stimulate subsequent ribonuclease cleavage. This is RNA pyrophosphohydrolase from Vibrio atlanticus (strain LGP32) (Vibrio splendidus (strain Mel32)).